Reading from the N-terminus, the 455-residue chain is Keratin, type I cuticular Ha5 (455 aa).

The head stretch occupies residues 1-97 (MASKCLKASF…FGEGILTGNE (97 aa)). One can recognise an IF rod domain in the interval 97 to 408 (EKETMQSLND…GLLESEDSKL (312 aa)). The segment at 98–132 (KETMQSLNDRLASYLEKVRQLEQENASLESRIREW) is coil 1A. Residues 133 to 143 (CEQQVPYMCPD) form a linker 1 region. Residues 144 to 244 (YQSYFRTMEE…HEEEVNSLRC (101 aa)) form a coil 1B region. Positions 245 to 260 (QLGDRLNVEVDAAPPV) are linker 12. A coil 2 region spans residues 261–404 (DLNRVLDEMR…NTYRGLLESE (144 aa)). A tail region spans residues 405–455 (DSKLPCNPCAPDYSSSKSCLPCLPAVSCSTGAARTTCSPRPVCVPCPGGRF).

It belongs to the intermediate filament family.

This is Keratin, type I cuticular Ha5 from Mus musculus (Mouse).